A 129-amino-acid chain; its full sequence is Small ribosomal subunit protein uS8 (129 aa).

It belongs to the universal ribosomal protein uS8 family. In terms of assembly, part of the 30S ribosomal subunit.

Functionally, one of the primary rRNA binding proteins, it binds directly to 16S rRNA central domain where it helps coordinate assembly of the platform of the 30S subunit. The protein is Small ribosomal subunit protein uS8 of Thermoplasma acidophilum (strain ATCC 25905 / DSM 1728 / JCM 9062 / NBRC 15155 / AMRC-C165).